We begin with the raw amino-acid sequence, 290 residues long: Enoyl-CoA hydratase, mitochondrial (290 aa).

Residues 1 to 27 (MAALRALLPRACSSLLSSVRCPELRRF) constitute a mitochondrion transit peptide. 98–101 (ADIK) is a substrate binding site. K101 carries the N6-acetyllysine; alternate modification. N6-succinyllysine; alternate is present on K101. Residue S114 is modified to Phosphoserine. Residue K115 is modified to N6-acetyllysine; alternate. K115 carries the post-translational modification N6-succinyllysine; alternate. G141 contributes to the substrate binding site. K204 is modified (N6-succinyllysine). K211 bears the N6-acetyllysine mark. At K217 the chain carries N6-acetyllysine; alternate. An N6-succinyllysine; alternate modification is found at K217.

It belongs to the enoyl-CoA hydratase/isomerase family. As to quaternary structure, homohexamer; dimer of trimers. In terms of processing, acetylation of Lys-101 is observed in liver mitochondria from fasted mice but not from fed mice.

It localises to the mitochondrion matrix. The enzyme catalyses a (3S)-3-hydroxyacyl-CoA = a (2E)-enoyl-CoA + H2O. It catalyses the reaction a (3E)-enoyl-CoA = a 4-saturated (2E)-enoyl-CoA. It carries out the reaction (3E)-hexenoyl-CoA = (2E)-hexenoyl-CoA. The catalysed reaction is (3S)-3-hydroxybutanoyl-CoA = (2E)-butenoyl-CoA + H2O. The enzyme catalyses 3-hydroxyisovaleryl-CoA = 3-methylbut-2-enoyl-CoA + H2O. It catalyses the reaction 3-hydroxypropanoyl-CoA = acryloyl-CoA + H2O. It carries out the reaction 3-hydroxybutanoyl-CoA = (2E)-butenoyl-CoA + H2O. The catalysed reaction is 2-methylpropenoyl-CoA + H2O = (S)-3-hydroxyisobutanoyl-CoA. The enzyme catalyses (3S)-hydroxyhexanoyl-CoA = (2E)-hexenoyl-CoA + H2O. It catalyses the reaction (3S)-hydroxydecanoyl-CoA = (2E)-decenoyl-CoA + H2O. It participates in lipid metabolism; fatty acid beta-oxidation. Its function is as follows. Converts unsaturated trans-2-enoyl-CoA species ((2E)-enoyl-CoA) to the corresponding (3S)-3-hydroxyacyl-CoA species through addition of a water molecule to the double bond. Catalyzes the hydration of medium- and short-chained fatty enoyl-CoA thioesters from 4 carbons long (C4) up to C16. Has high substrate specificity for crotonyl-CoA ((2E)-butenoyl-CoA) and moderate specificity for acryloyl-CoA, 3-methylcrotonyl-CoA (3-methyl-(2E)-butenoyl-CoA) and methacrylyl-CoA ((2E)-2-methylpropenoyl-CoA). Can bind tiglyl-CoA (2-methylcrotonoyl-CoA), but hydrates only a small amount of this substrate. Plays a key role in the beta-oxidation spiral of short- and medium-chain fatty acid oxidation. At a lower rate than the hydratase reaction, catalyzes the isomerase reaction of trans-3-enoyl-CoA species (such as (3E)-hexenoyl-CoA) to trans-2-enoyl-CoA species (such as (2E)-hexenoyl-CoA), which are subsequently hydrated to 3(S)-3-hydroxyacyl-CoA species (such as (3S)-hydroxyhexanoyl-CoA). The chain is Enoyl-CoA hydratase, mitochondrial from Mus musculus (Mouse).